Consider the following 855-residue polypeptide: Zinc finger protein 814 (855 aa).

The 77-residue stretch at 15–91 (VTFEDVAVNF…PMAGVSPKKA (77 aa)) folds into the KRAB domain. The segment at 120–142 (HRCEAWGNKLYDSGNFHQHQNEH) adopts a C2H2-type 1; degenerate zinc-finger fold. C2H2-type zinc fingers lie at residues 242–264 (YVCC…QRVH), 269–291 (HECG…QRVH), 296–318 (HECG…QRVH), 324–346 (YECG…QRVH), 352–374 (YECG…QRVH), 380–402 (YECG…QRVH), 408–430 (YECG…QRFH), 436–458 (YGCE…QRVH), 464–486 (FKCG…QRVH), 492–514 (YQCG…QRVH), 520–542 (YECG…QQIH), 548–570 (YECG…QRVH), 576–598 (YGCG…QRVH), 604–626 (YECG…QRMH), 632–654 (YKCG…QRVH), 660–682 (FKCG…QHGH), 688–710 (YVCR…QRIH), 716–738 (YACE…QRVH), 744–766 (YECN…KRIH), 772–794 (YECS…KRVH), 800–822 (YECS…KRVH), and 828–850 (YKCE…QSSH). Lys335 is covalently cross-linked (Glycyl lysine isopeptide (Lys-Gly) (interchain with G-Cter in SUMO2)). Lys391 participates in a covalent cross-link: Glycyl lysine isopeptide (Lys-Gly) (interchain with G-Cter in SUMO2).

The chain is Zinc finger protein 814 (ZNF814) from Homo sapiens (Human).